The primary structure comprises 403 residues: Glucosyl-3-phosphoglycerate synthase (403 aa).

Asp-150 contacts a divalent metal cation. Gly-189–Thr-192 serves as a coordination point for (2R)-3-phosphoglycerate. His-273 serves as a coordination point for a divalent metal cation.

Belongs to the glycosyltransferase 2 family. Homodimer. Requires Mn(2+) as cofactor. It depends on Co(2+) as a cofactor. Mg(2+) serves as cofactor. The cofactor is Ni(2+).

The enzyme catalyses an NDP-alpha-D-glucose + (2R)-3-phosphoglycerate = (2R)-2-O-(alpha-D-glucopyranosyl)-3-phospho-glycerate + a ribonucleoside 5'-diphosphate + H(+). In terms of biological role, involved in the biosynthesis of 6-O-methylglucose lipopolysaccarides (MGLPs). Catalyzes the transfer of a glucose (Glc) moiety from uridine diphosphate (UDP-Glc) to the position 2 of 3-phospho-D-glycerate (3-PGA) to form glucosyl-3-phosphoglycerate (GPG). GpgS is most active with UDP-glucose, followed by GDP-glucose, ADP-glucose, and to a lesser extent, TDP-glucose. 3-PGA is the only acceptor for these glucosyl donors. The sequence is that of Glucosyl-3-phosphoglycerate synthase from Persephonella marina (strain DSM 14350 / EX-H1).